A 407-amino-acid polypeptide reads, in one-letter code: MIYDHILVRYGELTLKGANRKIFVNKLRSNVKLALMPLQGYTVKANRDRMYIELDEGADIEEMCNRLKKVFGIYSISPVLKIEKTVEAVNELAVRFAKEYADGDTFKIDVKRSDKNFPYDTYALQRTVGGAVLDATNHLSVDVHNPDHNIKVEVRLDAIYMYDQVIEGSGGLPVGTGGKTLLMLSGGIDSPVAGIEVMRRGVTVEAIHFHSPPFTSEKAKEKVIELTRILSGHVGPIKLHIVPFTDLQKQVNKVVHERYTMTSTRRMMMRVADKVVHDIDAHAIVNGENLGQVASQTLKSMYAINHVTSTPVLRPLLTLDKEDIVKKAKEIGTFDVSIQPYEDCCTIFTPKNPITEPDIEKVEKYEIGYDFEPLVQQAVDGIETLLITSDYQSEKDTATQALADDLF.

The THUMP domain maps to 61-165 (EEMCNRLKKV…LDAIYMYDQV (105 aa)). ATP-binding positions include 183–184 (ML), 208–209 (HF), Arg-265, Gly-287, and Gln-296.

Belongs to the ThiI family.

The protein resides in the cytoplasm. It catalyses the reaction [ThiI sulfur-carrier protein]-S-sulfanyl-L-cysteine + a uridine in tRNA + 2 reduced [2Fe-2S]-[ferredoxin] + ATP + H(+) = [ThiI sulfur-carrier protein]-L-cysteine + a 4-thiouridine in tRNA + 2 oxidized [2Fe-2S]-[ferredoxin] + AMP + diphosphate. It carries out the reaction [ThiS sulfur-carrier protein]-C-terminal Gly-Gly-AMP + S-sulfanyl-L-cysteinyl-[cysteine desulfurase] + AH2 = [ThiS sulfur-carrier protein]-C-terminal-Gly-aminoethanethioate + L-cysteinyl-[cysteine desulfurase] + A + AMP + 2 H(+). Its pathway is cofactor biosynthesis; thiamine diphosphate biosynthesis. Its function is as follows. Catalyzes the ATP-dependent transfer of a sulfur to tRNA to produce 4-thiouridine in position 8 of tRNAs, which functions as a near-UV photosensor. Also catalyzes the transfer of sulfur to the sulfur carrier protein ThiS, forming ThiS-thiocarboxylate. This is a step in the synthesis of thiazole, in the thiamine biosynthesis pathway. The sulfur is donated as persulfide by IscS. This Staphylococcus saprophyticus subsp. saprophyticus (strain ATCC 15305 / DSM 20229 / NCIMB 8711 / NCTC 7292 / S-41) protein is Probable tRNA sulfurtransferase.